The primary structure comprises 176 residues: MLVPPINLHAWVEQHRHLLKPPVGNKCIQQDGFIIMIVGGPNARTDYHYDEGPEWFFQLEGEMVLKVQDDGTARDIPIRAGEIFLLPPKVPHSPQRAAGSIGLVIERERLPHEQDGLQWYCPQCNHKLYEAMFPLENIETDFPPVFDHFYRSLALRTCMQCGHVHPAPERYAAIEA.

R44 serves as a coordination point for O2. Fe cation is bound by residues H48, E54, and H92. E54 is a binding site for substrate. Residues R96 and E106 each coordinate substrate. Positions 121, 124, 158, and 161 each coordinate Fe cation.

Belongs to the 3-HAO family. As to quaternary structure, homodimer. Fe(2+) is required as a cofactor.

It catalyses the reaction 3-hydroxyanthranilate + O2 = (2Z,4Z)-2-amino-3-carboxymuconate 6-semialdehyde. It functions in the pathway cofactor biosynthesis; NAD(+) biosynthesis; quinolinate from L-kynurenine: step 3/3. Its function is as follows. Catalyzes the oxidative ring opening of 3-hydroxyanthranilate to 2-amino-3-carboxymuconate semialdehyde, which spontaneously cyclizes to quinolinate. The protein is 3-hydroxyanthranilate 3,4-dioxygenase of Xanthomonas campestris pv. campestris (strain B100).